Here is an 88-residue protein sequence, read N- to C-terminus: Apolipoprotein C-I (88 aa).

Positions 1–26 (MRLILSLPVLAVVLAMVLEGPAPAQA) are cleaved as a signal peptide.

Belongs to the apolipoprotein C1 family.

It is found in the secreted. Its function is as follows. Inhibitor of lipoprotein binding to the low density lipoprotein (LDL) receptor, LDL receptor-related protein, and very low density lipoprotein (VLDL) receptor. Associates with high density lipoproteins (HDL) and the triacylglycerol-rich lipoproteins in the plasma and makes up about 10% of the protein of the VLDL and 2% of that of HDL. Appears to interfere directly with fatty acid uptake and is also the major plasma inhibitor of cholesteryl ester transfer protein (CETP). Binds free fatty acids and reduces their intracellular esterification. Modulates the interaction of APOE with beta-migrating VLDL and inhibits binding of beta-VLDL to the LDL receptor-related protein. This Eidolon helvum (Straw-colored fruit bat) protein is Apolipoprotein C-I (APOC1).